Reading from the N-terminus, the 470-residue chain is Nuclear receptor subfamily 0 group B member 1 (470 aa).

Tandem repeats lie at residues 1 to 67 (MAGE…YRCC), 68 to 133 (FCGK…YRCC), and 134 to 200 (FCGE…YRCC). The tract at residues 1–253 (MAGENHQWQG…RPVALKSPQV (253 aa)) is 4 X 67 AA tandem repeats. 3 consecutive short sequence motifs (LXXLL motif) follow at residues 13 to 17 (LYNML), 80 to 84 (LYSML), and 146 to 150 (LYSLL). Residues 201 to 253 (FCGEDHPQQGSTLYCVPTSTNQAQAAPEERPRAPWWDTSSGALRPVALKSPQV) form a 4; truncated repeat. Positions 205-469 (DHPQQGSTLY…DMMLEMLCTK (265 aa)) constitute an NR LBD domain. The AF-2 motif motif lies at 461 to 466 (MMLEML).

This sequence belongs to the nuclear hormone receptor family. NR0 subfamily. As to quaternary structure, homodimer. Interacts with NR5A1, NR5A2, NR0B2 and with COPS2. Interacts with ESRRB; represses ESRRB activity at the GATA6 promoter.

The protein resides in the nucleus. It is found in the cytoplasm. Functionally, nuclear receptor that lacks a DNA-binding domain and acts as a corepressor that inhibits the transcriptional activity of other nuclear receptors through heterodimeric interactions. Component of a cascade required for the development of the hypothalamic-pituitary-adrenal-gonadal axis. May also have a role in the development of the embryo and in the maintenance of embryonic stem cell pluripotency. In Homo sapiens (Human), this protein is Nuclear receptor subfamily 0 group B member 1 (NR0B1).